The sequence spans 728 residues: Magnetosome formation protease MamE (728 aa).

The Cytoplasmic portion of the chain corresponds to 1 to 21 (MAMFNGDVEDGGRGDASCGKD). The chain crosses the membrane as a helical span at residues 22-42 (LKRYLMLMGVVALVVLFGAFI). Residues 43–728 (YRQSSGGLRL…RNGQEFWIVL (686 aa)) are Lumenal-facing. Active-site charge relay system residues include H188, D221, and S297. Residues 375–398 (IFAGTRAPHTDGRQNMDCTTCHDL) carry the MCR (magnetochrome) 1 motif. Heme is bound by residues C392, C395, H396, C438, C441, and H442. Residues 421-444 (IPMGAVSPHTDGRQNMNCANCHQM) carry the MCR 2 motif. PDZ domains follow at residues 471-573 (AINI…LRDG) and 622-721 (PAVM…NRNG).

It in the N-terminal section; belongs to the peptidase S1C family. As to quaternary structure, might interact with MamB via PDZ1. Heme is required as a cofactor. Subject to autocatalytic cleavage; cleavage also requires MamO.

Its subcellular location is the magnetosome membrane. Its activity is regulated as follows. Autoproteolysis is stimulated by exogenous substrates or peptides that bind to its PDZ domains; may be stimulated by an environmental cue in vivo. Protease activity is tightly regulated; increasing its activity decreases substrate levels and disturbs biomineralization. Acts at 2 distinct steps of magnetosome formation; required for correct localization of proteins to the magnetosome while the protease activity is required for maturation of small magnetite crystals into larger, functional ones. The 2 functions are separable by mutation. Probably cleaves at least itself, MamO and MamP; cleavage requires the putative transport domain of MamO. Involved in localization of some proteins (at least MamA, MamC, MamF, MamI and MamJ) to the magnetosome. This Paramagnetospirillum magneticum (strain ATCC 700264 / AMB-1) (Magnetospirillum magneticum) protein is Magnetosome formation protease MamE (mamE).